The sequence spans 284 residues: Phosphatidylglycerol--prolipoprotein diacylglyceryl transferase (284 aa).

Transmembrane regions (helical) follow at residues 19 to 39 (ISFYWYGMMYVLSFIFAMWFL), 60 to 80 (LLYLNFLGVVIGGRIGYVLFY), 98 to 118 (GGMSFHGGLIGVIISIMWFSY), 130 to 150 (FIVPAVPVGLGLGRLGNFING), 199 to 219 (QLYEMILEGIVLFVVIYIFSC), 225 to 245 (GSISGLFLLLYGLFRIIIEFF), and 258 to 278 (FITLGQVLSFPMVIFGFIIMY). A 1,2-diacyl-sn-glycero-3-phospho-(1'-sn-glycerol) is bound at residue R143.

This sequence belongs to the Lgt family.

It localises to the cell inner membrane. It catalyses the reaction L-cysteinyl-[prolipoprotein] + a 1,2-diacyl-sn-glycero-3-phospho-(1'-sn-glycerol) = an S-1,2-diacyl-sn-glyceryl-L-cysteinyl-[prolipoprotein] + sn-glycerol 1-phosphate + H(+). It functions in the pathway protein modification; lipoprotein biosynthesis (diacylglyceryl transfer). In terms of biological role, catalyzes the transfer of the diacylglyceryl group from phosphatidylglycerol to the sulfhydryl group of the N-terminal cysteine of a prolipoprotein, the first step in the formation of mature lipoproteins. This chain is Phosphatidylglycerol--prolipoprotein diacylglyceryl transferase, found in Blochmanniella floridana.